A 255-amino-acid chain; its full sequence is tRNA (guanine-N(7)-)-methyltransferase (255 aa).

The segment at 1–37 is disordered; the sequence is MTAAASDPHNPRSSADDTASPRCESGQGSFFGRRKGH. S-adenosyl-L-methionine is bound by residues Glu80, Glu105, Asp132, and Asp154. Asp154 is a catalytic residue. Positions 158 and 190 each coordinate substrate.

It belongs to the class I-like SAM-binding methyltransferase superfamily. TrmB family.

The enzyme catalyses guanosine(46) in tRNA + S-adenosyl-L-methionine = N(7)-methylguanosine(46) in tRNA + S-adenosyl-L-homocysteine. The protein operates within tRNA modification; N(7)-methylguanine-tRNA biosynthesis. Functionally, catalyzes the formation of N(7)-methylguanine at position 46 (m7G46) in tRNA. The chain is tRNA (guanine-N(7)-)-methyltransferase from Nitrobacter hamburgensis (strain DSM 10229 / NCIMB 13809 / X14).